The primary structure comprises 179 residues: Peptide deformylase (179 aa).

Fe cation contacts are provided by cysteine 102 and histidine 144. Glutamate 145 is an active-site residue. Residue histidine 148 participates in Fe cation binding.

It belongs to the polypeptide deformylase family. Requires Fe(2+) as cofactor.

The enzyme catalyses N-terminal N-formyl-L-methionyl-[peptide] + H2O = N-terminal L-methionyl-[peptide] + formate. Its function is as follows. Removes the formyl group from the N-terminal Met of newly synthesized proteins. Requires at least a dipeptide for an efficient rate of reaction. N-terminal L-methionine is a prerequisite for activity but the enzyme has broad specificity at other positions. In Wolbachia pipientis wMel, this protein is Peptide deformylase.